The following is a 173-amino-acid chain: 3-isopropylmalate dehydratase small subunit (173 aa).

It belongs to the LeuD family. LeuD type 2 subfamily. Heterodimer of LeuC and LeuD.

The enzyme catalyses (2R,3S)-3-isopropylmalate = (2S)-2-isopropylmalate. It participates in amino-acid biosynthesis; L-leucine biosynthesis; L-leucine from 3-methyl-2-oxobutanoate: step 2/4. Catalyzes the isomerization between 2-isopropylmalate and 3-isopropylmalate, via the formation of 2-isopropylmaleate. The chain is 3-isopropylmalate dehydratase small subunit from Caldicellulosiruptor saccharolyticus (strain ATCC 43494 / DSM 8903 / Tp8T 6331).